Consider the following 200-residue polypeptide: Coiled-coil domain-containing protein 85B (200 aa).

Positions L57–L84 form a coiled coil. Low complexity predominate over residues D178 to S188. Residues D178–D200 are disordered.

This sequence belongs to the CCDC85 family.

It is found in the nucleus. The protein localises to the cytoplasm. Its subcellular location is the cytoskeleton. It localises to the microtubule organizing center. The protein resides in the centrosome. It is found in the cell junction. The protein localises to the adherens junction. In terms of biological role, functions as a transcriptional repressor. May inhibit the activity of CTNNB1 in a TP53-dependent manner and thus regulate cell growth. May function in adipocyte differentiation, negatively regulating mitotic clonal expansion. Plays a role in cell-cell adhesion and epithelium development through its interaction with proteins of the beta-catenin family. This chain is Coiled-coil domain-containing protein 85B (ccdc85b), found in Danio rerio (Zebrafish).